The sequence spans 839 residues: Taste receptor type 1 member 2 (839 aa).

Residues methionine 1–alanine 19 form the signal peptide. Residues glutamate 20–threonine 566 lie on the Extracellular side of the membrane. N-linked (GlcNAc...) asparagine glycans are attached at residues asparagine 84, asparagine 248, asparagine 292, asparagine 312, asparagine 368, asparagine 407, asparagine 428, asparagine 487, and asparagine 527. The helical transmembrane segment at isoleucine 567–phenylalanine 587 threads the bilayer. At tryptophan 588 to proline 602 the chain is on the cytoplasmic side. The helical transmembrane segment at methionine 603–glycine 623 threads the bilayer. Residues proline 624–alanine 635 lie on the Extracellular side of the membrane. Residues leucine 636–valine 656 form a helical membrane-spanning segment. Topologically, residues cysteine 657–serine 681 are cytoplasmic. Residues methionine 682–leucine 702 traverse the membrane as a helical segment. The Extracellular segment spans residues serine 703–serine 727. The chain crosses the membrane as a helical span at residues leucine 728 to methionine 748. Topologically, residues glycine 749–lysine 760 are cytoplasmic. The helical transmembrane segment at phenylalanine 761 to serine 781 threads the bilayer. Over alanine 782–serine 784 the chain is Extracellular. A helical transmembrane segment spans residues glycine 785 to leucine 805. Topologically, residues glycine 806 to aspartate 839 are cytoplasmic.

Belongs to the G-protein coupled receptor 3 family. TAS1R subfamily. Forms heterodimers with TAS1R3.

The protein resides in the cell membrane. Putative taste receptor. TAS1R2/TAS1R3 recognizes diverse natural and synthetic sweeteners. The polypeptide is Taste receptor type 1 member 2 (TAS1R2) (Gorilla gorilla gorilla (Western lowland gorilla)).